The primary structure comprises 390 residues: Phosphoglycerate kinase (390 aa).

Substrate is bound by residues 21–23, R36, 59–62, R114, and R147; these read DLN and HLGR. Residues K198, E314, and 340–343 each bind ATP; that span reads GGDT.

This sequence belongs to the phosphoglycerate kinase family. Monomer.

Its subcellular location is the cytoplasm. The enzyme catalyses (2R)-3-phosphoglycerate + ATP = (2R)-3-phospho-glyceroyl phosphate + ADP. The protein operates within carbohydrate degradation; glycolysis; pyruvate from D-glyceraldehyde 3-phosphate: step 2/5. This is Phosphoglycerate kinase from Buchnera aphidicola subsp. Acyrthosiphon pisum (strain 5A).